The chain runs to 604 residues: Zinc finger protein chinmo (604 aa).

One can recognise a BTB domain in the interval 32-98 (ADVILSCDGV…MYKGEVHVSQ (67 aa)). Disordered stretches follow at residues 122-155 (RLAA…SGGS), 291-310 (CDSL…GYTH), 330-437 (RSPY…DEST), and 450-470 (NLKY…TPNT). Low complexity predominate over residues 364-374 (PSSSASSTAPT). The span at 384–409 (ASPQSSRYENHSPSTTAGNGNATSSL) shows a compositional bias: polar residues. Over residues 425–437 (ANDDDRELMDEST) the composition is skewed to acidic residues. Residues 461–470 (SNTSSTTPNT) show a composition bias toward low complexity. 2 consecutive C2H2-type zinc fingers follow at residues 517-540 (LKCL…RQRH) and 545-568 (VPCP…AREH).

Broadly expressed in the developing larval central nervous system (at protein level). Expressed in the larval lymph gland and circulating hemocytes (at protein level). Expressed in all cell types of the adult testis stem cell niche but not detected in somatic cells of the adult ovary (at protein level). In the testis, expressed at high levels in cyst stem cells and early cyst cells and, at lower levels, in germline stem cells (at protein level).

The protein resides in the nucleus. In terms of biological role, required for morphological differentiation of postmitotic neurons during postembryonic brain development. Ensures production of appropriate neuron subtypes within a lineage by preventing precocious generation of late neuronal types of that lineage. Acts as a downstream mediator of the transcriptional activator Stat92e and is required for the development of the eye-antennal disk which gives rise to the adult eye, antenna and head capsule, for transcriptional repression of the Notch receptor ligand Ser and for the self-renewal of cyst stem cells in the testis. In the adult testis, maintains the male identify of adult somatic cyst stem cells. Represses expression and alternative splicing of transformer pre-mRNA, resulting in the production of the male-specific isoform of transcription factor dsx which ensures male-specific transcription of target genes. Plays a role in actin nuclear localization through its involvement in repressing the expression of the kinase Cdi. This maintains the cofilin/actin-depolymerizing factor homolog tsr in its unphosphorylated state which is required for actin nuclear import. This is Zinc finger protein chinmo from Drosophila melanogaster (Fruit fly).